A 499-amino-acid polypeptide reads, in one-letter code: Phenylalanine--tRNA ligase alpha subunit (499 aa).

L-phenylalanine-binding positions include threonine 333, 372 to 374, and tyrosine 412; that span reads QIE. Residue glutamate 414 coordinates Mg(2+). Phenylalanine 436 lines the L-phenylalanine pocket.

The protein belongs to the class-II aminoacyl-tRNA synthetase family. Phe-tRNA synthetase alpha subunit type 2 subfamily. In terms of assembly, tetramer of two alpha and two beta subunits. Requires Mg(2+) as cofactor.

The protein localises to the cytoplasm. The enzyme catalyses tRNA(Phe) + L-phenylalanine + ATP = L-phenylalanyl-tRNA(Phe) + AMP + diphosphate + H(+). This is Phenylalanine--tRNA ligase alpha subunit from Thermoplasma acidophilum (strain ATCC 25905 / DSM 1728 / JCM 9062 / NBRC 15155 / AMRC-C165).